The primary structure comprises 324 residues: DNA-directed RNA polymerase subunit alpha (324 aa).

An alpha N-terminal domain (alpha-NTD) region spans residues 1–228 (MIEFQKPTIR…EHFNLFTDLS (228 aa)). The tract at residues 245–324 (RNKLLDMTIE…STPKEEEEEK (80 aa)) is alpha C-terminal domain (alpha-CTD).

The protein belongs to the RNA polymerase alpha chain family. As to quaternary structure, homodimer. The RNAP catalytic core consists of 2 alpha, 1 beta, 1 beta' and 1 omega subunit. When a sigma factor is associated with the core the holoenzyme is formed, which can initiate transcription.

The enzyme catalyses RNA(n) + a ribonucleoside 5'-triphosphate = RNA(n+1) + diphosphate. In terms of biological role, DNA-dependent RNA polymerase catalyzes the transcription of DNA into RNA using the four ribonucleoside triphosphates as substrates. The sequence is that of DNA-directed RNA polymerase subunit alpha from Caldicellulosiruptor bescii (strain ATCC BAA-1888 / DSM 6725 / KCTC 15123 / Z-1320) (Anaerocellum thermophilum).